We begin with the raw amino-acid sequence, 200 residues long: Cytochrome c biogenesis ATP-binding export protein CcmA (200 aa).

The ABC transporter domain maps to 2 to 200 (LDVIELDFDY…NKADYEEYHL (199 aa)). Residue 34-41 (GSNGAGKT) participates in ATP binding.

Belongs to the ABC transporter superfamily. CcmA exporter (TC 3.A.1.107) family. The complex is composed of two ATP-binding proteins (CcmA) and two transmembrane proteins (CcmB).

Its subcellular location is the cell inner membrane. The enzyme catalyses heme b(in) + ATP + H2O = heme b(out) + ADP + phosphate + H(+). Its function is as follows. Part of the ABC transporter complex CcmAB involved in the biogenesis of c-type cytochromes; once thought to export heme, this seems not to be the case, but its exact role is uncertain. Responsible for energy coupling to the transport system. This Legionella pneumophila (strain Paris) protein is Cytochrome c biogenesis ATP-binding export protein CcmA.